The primary structure comprises 322 residues: MNLGFRVTGKFVRELLDVLDEIAEEIRQEEKEKYPYTEWERKREVVKERLRKLPEYVREAISVITVQKRVGRPKKVDLEKRVMLFLFARLMDKSNRDIEELLELFEPLFGIKVSYKTIERLYSDEEVRMALHNLFILLLREEGVSGDFSGDGTGYSLTITKHYRSNPKRKGKDFRYVFRIIDIDTGMYVGFGYSDRSEKDAFEKALGMLKSMGVKVNSISLDKYYSSRKTLRLFDAETAVYVIPKRNLARIGFDWLRVIERIVEAPYRFLKRYFKRNLSEAGFSADKRRFGWLIRQRREDRREMALFAVGLWHNVFAVRVVR.

It belongs to the transposase 11 family.

Its function is as follows. Involved in the transposition of the insertion sequence ISA1214. The polypeptide is Probable transposase for insertion sequence element ISA1214 (Archaeoglobus fulgidus (strain ATCC 49558 / DSM 4304 / JCM 9628 / NBRC 100126 / VC-16)).